A 472-amino-acid chain; its full sequence is Ribosomal protein uS12 methylthiotransferase RimO (472 aa).

One can recognise an MTTase N-terminal domain in the interval 33-143 (NRIGFVSLGC…VLKHVHKYVP (111 aa)). Residues cysteine 42, cysteine 78, cysteine 107, cysteine 175, cysteine 179, and cysteine 182 each coordinate [4Fe-4S] cluster. In terms of domain architecture, Radical SAM core spans 161-398 (LTPKHYAYLK…MEVQAEISAE (238 aa)). One can recognise a TRAM domain in the interval 401 to 467 (ARFVGRTLDI…EHDLWAEVVD (67 aa)).

It belongs to the methylthiotransferase family. RimO subfamily. It depends on [4Fe-4S] cluster as a cofactor.

Its subcellular location is the cytoplasm. It catalyses the reaction L-aspartate(89)-[ribosomal protein uS12]-hydrogen + (sulfur carrier)-SH + AH2 + 2 S-adenosyl-L-methionine = 3-methylsulfanyl-L-aspartate(89)-[ribosomal protein uS12]-hydrogen + (sulfur carrier)-H + 5'-deoxyadenosine + L-methionine + A + S-adenosyl-L-homocysteine + 2 H(+). Its function is as follows. Catalyzes the methylthiolation of an aspartic acid residue of ribosomal protein uS12. This is Ribosomal protein uS12 methylthiotransferase RimO from Shewanella baltica (strain OS185).